A 455-amino-acid polypeptide reads, in one-letter code: ATP-dependent protease ATPase subunit HslU (455 aa).

ATP contacts are provided by residues I19 and G61–E66. The segment at E144–K163 is disordered. The ATP site is built by D268, E333, and R405.

Belongs to the ClpX chaperone family. HslU subfamily. A double ring-shaped homohexamer of HslV is capped on each side by a ring-shaped HslU homohexamer. The assembly of the HslU/HslV complex is dependent on binding of ATP.

The protein localises to the cytoplasm. ATPase subunit of a proteasome-like degradation complex; this subunit has chaperone activity. The binding of ATP and its subsequent hydrolysis by HslU are essential for unfolding of protein substrates subsequently hydrolyzed by HslV. HslU recognizes the N-terminal part of its protein substrates and unfolds these before they are guided to HslV for hydrolysis. This is ATP-dependent protease ATPase subunit HslU from Francisella tularensis subsp. novicida (strain U112).